Consider the following 162-residue polypeptide: Ribosome maturation factor RimP (162 aa).

It belongs to the RimP family.

The protein resides in the cytoplasm. In terms of biological role, required for maturation of 30S ribosomal subunits. In Cupriavidus pinatubonensis (strain JMP 134 / LMG 1197) (Cupriavidus necator (strain JMP 134)), this protein is Ribosome maturation factor RimP.